We begin with the raw amino-acid sequence, 145 residues long: Putative BCoR-like protein 2 (145 aa).

Positions 1–27 (MKEKLSKKRAEVKGNRSWLEEFLKPSD) are enriched in basic and acidic residues. The interval 1–58 (MKEKLSKKRAEVKGNRSWLEEFLKPSDNEEGPPPKNKVLSNNASSQKPTHSSCIPLLR) is disordered. Residues 38-52 (VLSNNASSQKPTHSS) are compositionally biased toward polar residues.

It belongs to the BCOR family.

The chain is Putative BCoR-like protein 2 (BCORP1) from Homo sapiens (Human).